Reading from the N-terminus, the 614-residue chain is Vitamin B12 transporter BtuB (614 aa).

Positions 1 to 20 are cleaved as a signal peptide; that stretch reads MIKKASLLTACSVTAFSAWA. The Periplasmic portion of the chain corresponds to 21-157; sequence QDTSPDTLVV…NIITTRDEPG (137 aa). The TonB box signature appears at 26-33; that stretch reads DTLVVTAN. Residues 38 to 152 form the TBDR plug domain; it reads PRSTVLAPTT…IGGVVNIITT (115 aa). Cyanocob(III)alamin is bound by residues L83, S85, N92, and 110-111; that span reads VS. Positions 155-614 constitute a TBDR beta-barrel domain; that stretch reads EPGTEISAGW…EYTLSGSYTF (460 aa). A beta stranded transmembrane segment spans residues 158–165; that stretch reads TEISAGWG. The Extracellular portion of the chain corresponds to 166-168; the sequence is SNS. A beta stranded transmembrane segment spans residues 169 to 178; the sequence is YQNYDVSTQQ. Residues 179-183 are Periplasmic-facing; sequence QLGDK. Residues 184 to 195 traverse the membrane as a beta stranded segment; that stretch reads TRVTLLGDYAHT. Over 196–216 the chain is Extracellular; that stretch reads HGYDVVAYGNTGTQAQTDNDG. The Ca(2+) site is built by D199, Q211, D213, and D215. Residues 217–227 traverse the membrane as a beta stranded segment; sequence FLSKTLYGALE. Residues 228 to 231 lie on the Periplasmic side of the membrane; the sequence is HNFT. Residues 232-248 form a beta stranded membrane-spanning segment; that stretch reads DAWSGFVRGYGYDNRTN. Ca(2+)-binding residues include Y249 and D250. At 249–262 the chain is on the extracellular side; that stretch reads YDAYYSPGSPLLDT. A251 lines the cyanocob(III)alamin pocket. A Ca(2+)-binding site is contributed by D261. Residues 263 to 277 form a beta stranded membrane-spanning segment; that stretch reads RKLYSQSWDAGLRYN. G278 is a topological domain (periplasmic). A beta stranded membrane pass occupies residues 279 to 296; the sequence is ELIKSQLITSYSHSKDYN. At 297 to 308 the chain is on the extracellular side; the sequence is YDPHYGRYDSSA. T309 is a binding site for cyanocob(III)alamin. Residues 309-325 form a beta stranded membrane-spanning segment; the sequence is TLDEMKQYTVQWANNVI. Topologically, residues 326-327 are periplasmic; sequence VG. Residues 328-337 traverse the membrane as a beta stranded segment; that stretch reads HGSIGAGVDW. Topologically, residues 338 to 352 are extracellular; sequence QKQTTTPGTGYVEDG. A beta stranded membrane pass occupies residues 353–369; the sequence is YDQRNTGIYLTGLQQVG. A topological domain (periplasmic) is located at residue D370. Residues 371–381 traverse the membrane as a beta stranded segment; it reads FTFEGAARSDD. At 382–384 the chain is on the extracellular side; it reads NSQ. The beta stranded transmembrane segment at 385–400 threads the bilayer; sequence FGRHGTWQTSAGWEFI. The Periplasmic segment spans residues 401 to 402; sequence EG. A beta stranded transmembrane segment spans residues 403–417; sequence YRFIASYGTSYKAPN. At 418–433 the chain is on the extracellular side; it reads LGQLYGFYGNPNLDPE. A beta stranded membrane pass occupies residues 434–443; that stretch reads KSKQWEGAFE. At 444 to 448 the chain is on the periplasmic side; that stretch reads GLTAG. The beta stranded transmembrane segment at 449–458 threads the bilayer; that stretch reads VNWRISGYRN. The Extracellular portion of the chain corresponds to 459–472; it reads DVSDLIDYDDHTLK. Residues 473–490 traverse the membrane as a beta stranded segment; it reads YYNEGKARIKGVEATANF. At 491 to 493 the chain is on the periplasmic side; the sequence is DTG. A beta stranded membrane pass occupies residues 494-509; sequence PLTHTVSYDYVDARNA. The Extracellular segment spans residues 510 to 516; the sequence is ITDTPLL. A cyanocob(III)alamin-binding site is contributed by R517. Residues 517-529 traverse the membrane as a beta stranded segment; sequence RRAKQQVKYQLDW. Topologically, residues 530–534 are periplasmic; the sequence is QLYDF. Residues 535–550 traverse the membrane as a beta stranded segment; it reads DWGITYQYLGTRYDKD. Y551 contributes to the cyanocob(III)alamin binding site. Residues 551 to 557 are Extracellular-facing; it reads YSSYPYQ. The beta stranded transmembrane segment at 558–572 threads the bilayer; that stretch reads TVKMGGVSLWDLAVA. At 573–584 the chain is on the periplasmic side; that stretch reads YPVTSHLTVRGK. The beta stranded transmembrane segment at 585 to 596 threads the bilayer; that stretch reads IANLFDKDYETV. At 597 to 601 the chain is on the extracellular side; it reads YGYQT. The short motif at 597–614 is the TonB C-terminal box element; sequence YGYQTAGREYTLSGSYTF. The chain crosses the membrane as a beta stranded span at residues 602–614; it reads AGREYTLSGSYTF.

This sequence belongs to the TonB-dependent receptor family. BtuB (TC 1.B.14.3.1) subfamily. As to quaternary structure, interacts with TonB. In terms of assembly, (Microbial infection) The hairpin motif of the receptor-binding domain of colicin E3 (ColE3) interacts with BtuB without displacing BtuB's central plug. An N-terminal fragment of E3 binds OmpF; trimeric complexes with ColE3, BtuB and OmpF can be cross-linked and immunoprecipitated.

The protein localises to the cell outer membrane. With respect to regulation, calcium increases vitamin B12 binding affinity by a factor of 50-100. Its activity is regulated as follows. (Microbial infection) Colicins E1, E3 and K inhibit cyanocobalamin (CN-B12) uptake; E1 and E3 inhibit binding of CN-B12 to cells while colicin K inhibits a later, energy-dependent step of CN-B12. Involved in the active translocation of vitamin B12 (cyanocobalamin) across the outer membrane to the periplasmic space. It derives its energy for transport by interacting with the trans-periplasmic membrane protein TonB. Functionally, (Microbial infection) Acts as a receptor for bacteriophages BF23 and C1, and for A and E colicins. Cyanocobalamin (CN-B12) in solid medium protects against colicins E1 and E3. Does not act as the translocon for colicin E3 (ColE3). The translocon is OmpF; trimeric complexes with ColE3, BtuB and OmpF can be cross-linked and immunoprecipitated. The chain is Vitamin B12 transporter BtuB from Escherichia coli (strain K12).